A 116-amino-acid chain; its full sequence is Cystatin (116 aa).

The Secondary area of contact motif lies at 53-57 (QLVSG). Intrachain disulfides connect Cys71/Cys81 and Cys95/Cys115. A Phosphoserine modification is found at Ser80.

This sequence belongs to the cystatin family.

It localises to the secreted. This protein binds tightly to and inhibits papain and cathepsin B. This chain is Cystatin, found in Coturnix japonica (Japanese quail).